The primary structure comprises 169 residues: Disulfide bond formation protein B 1 (169 aa).

The Cytoplasmic portion of the chain corresponds to 1–14 (MSDNTLYLRREKRF). Residues 15–31 (LVLLGIICLALIGGALY) form a helical membrane-spanning segment. Over 32 to 49 (MQVVLDEAPCPLCILQRY) the chain is Periplasmic. An intrachain disulfide couples Cys41 to Cys44. Residues 50–65 (ALLFIAIFAFIGAAMP) traverse the membrane as a helical segment. At 66-72 (GRRSVTA) the chain is on the cytoplasmic side. A helical transmembrane segment spans residues 73–89 (FETLVTLSALGGIAAAG). At 90 to 144 (RHVWILAHPSDSCGIDVLQPIVDGLPLATLFPTGFQVSGFCTTPYPPVLGLSLAQ) the chain is on the periplasmic side. Residues Cys102 and Cys130 are joined by a disulfide bond. The chain crosses the membrane as a helical span at residues 145-163 (WALTAFVLTAVLVPACIIR). Over 164–169 (NRRKPY) the chain is Cytoplasmic.

It belongs to the DsbB family.

It is found in the cell inner membrane. Functionally, required for disulfide bond formation in some periplasmic proteins. Acts by oxidizing the DsbA protein. The polypeptide is Disulfide bond formation protein B 1 (Pseudomonas syringae pv. syringae (strain B728a)).